The sequence spans 555 residues: Efflux pump FUS6 (555 aa).

The interval 1 to 23 (MASAKDAQPAPEKSLSSDPQPEP) is disordered. 5 helical membrane passes run 31–51 (WLIF…TSII), 67–87 (LYVW…PIFA), 97–117 (SLTL…GGAH), 130–150 (GIGG…MVSI), and 159–179 (IIGG…GAFA). N-linked (GlcNAc...) asparagine glycosylation occurs at Asn181. 3 helical membrane passes run 186-206 (WIFY…GLFL), 225-245 (WGGS…LSWG), and 253-273 (GWQT…FFAY). Asn291 carries an N-linked (GlcNAc...) asparagine glycan. 6 helical membrane passes run 297–317 (LLVI…FLPV), 332–352 (VMLF…GITI), 360–380 (VWHF…TLLD), 393–413 (ILFG…ILAS), 425–445 (AWTF…AAVF), and 501–521 (KVVW…CFFV). An N-linked (GlcNAc...) asparagine glycan is attached at Asn545.

It belongs to the major facilitator superfamily. TCR/Tet family.

It localises to the membrane. In terms of biological role, efflux pump; part of the gene cluster that mediates the biosynthesis of the mycotoxin fusarin C. Within the cluster, FUS1, FUS2, FUS8 and FUS9 are sufficient for fusarin production. The other FUS cluster members are not essential for fusarin C biosynthesis. The protein is Efflux pump FUS6 of Gibberella fujikuroi (strain CBS 195.34 / IMI 58289 / NRRL A-6831) (Bakanae and foot rot disease fungus).